The primary structure comprises 1871 residues: MENEIFTPLLEQFMTSPLVTWVKTFGPLAAGNGTNLDEYVALVDGVFLNQVMLQINPKLESQRVNKKVNNDASLRMHNLSILVRQIKFYYQETLQQLIMMSLPNVLIIGKNPFSEQGTEEVKKLLLLLLGCAVQCQKKEEFIERIQGLDFDTKAAVAAHIQEVTHNQENVFDLQWMEVTDMSQEDIEPLLKNMALHLKRLIDERDEHSETIIELSEERDGLHFLPHASSSAQSPCGSPGMKRTESRQHLSVELADAKAKIRRLRQELEEKTEQLLDCKQELEQMEIELKRLQQENMNLLSDARSARMYRDELDALREKAVRVDKLESEVSRYKERLHDIEFYKARVEELKEDNQVLLETKTMLEDQLEGTRARSDKLHELEKENLQLKAKLHDMEMERDMDRKKIEELMEENMTLEMAQKQSMDESLHLGWELEQISRTSELSEAPQKSLGHEVNELTSSRLLKLEMENQSLTKTVEELRTTVDSVEGNASKILKMEKENQRLSKKVEILENEIVQEKQSLQNCQNLSKDLMKEKAQLEKTIETLRENSERQIKILEQENEHLNQTVSSLRQRSQISAEARVKDIEKENKILHESIKETSSKLSKIEFEKRQIKKELEHYKEKGERAEELENELHHLEKENELLQKKITNLKITCEKIEALEQENSELERENRKLKKTLDSFKNLTFQLESLEKENSQLDEENLELRRNVESLKCASMKMAQLQLENKELESEKEQLKKGLELLKASFKKTERLEVSYQGLDIENQRLQKTLENSNKKIQQLESELQDLEMENQTLQKNLEELKISSKRLEQLEKENKSLEQETSQLEKDKKQLEKENKRLRQQAEIKDTTLEENNVKIGNLEKENKTLSKEIGIYKESCVRLKELEKENKELVKRATIDIKTLVTLREDLVSEKLKTQQMNNDLEKLTHELEKIGLNKERLLHDEQSTDDSRYKLLESKLESTLKKSLEIKEEKIAALEARLEESTNYNQQLRQELKTVKKNYEALKQRQDEERMVQSSPPISGEDNKWERESQETTRELLKVKDRLIEVERNNATLQAEKQALKTQLKQLETQNNNLQAQILALQRQTVSLQEQNTTLQTQNAKLQVENSTLNSQSTSLMNQNAQLLIQQSSLENENESVIKEREDLKSLYDSLIKDHEKLELLHERQASEYESLISKHGTLKSAHKNLEVEHRDLEDRYNQLLKQKGQLEDLEKMLKVEQEKMLLENKNHETVAAEYKKLCGENDRLNHTYSQLLKETEVLQTDHKNLKSLLNNSKLEQTRLEAEFSKLKEQYQQLDITSTKLNNQCELLSQLKGNLEEENRHLLDQIQTLMLQNRTLLEQNMESKDLFHVEQRQYIDKLNELRRQKEKLEEKIMDQYKFYDPSPPRRRGNWITLKMRKLIKSKKDINRERQKSLTLTPTRSDSSEGFLQLPHQDSQDSSSVGSNSLEDGQTLGTKKSSMVALKRLPFLRNRPKDKDKMKACYRRSMSMNDLVQSMVLAGQWTGSTENLEVPDDISTGKRRKELGAMAFSTTAINFSTVNSSAGFRSKQLVNNKDTTSFEDISPQGVSDDSSTGSRVHASRPASLDSGRTSTSNSNNNASLHEVKAGAVNNQSRPQSHSSGEFSLLHDHEAWSSSGSSPIQYLKRQTRSSPVLQHKISETLESRHHKIKTGSPGSEVVTLQQFLEESNKLTSVQIKSSSQENLLDEVMKSLSVSSDFLGKDKPVSCGLARSVSGKTPGDFYDRRTTKPEFLRPGPRKTEDTYFISSAGKPTPGTQGKIKLVKESSLSRQSKDSNPYATLPRASSVISTAEGTTRRTSIHDFLTKDSRLPISVDSPPAAADSNTTAASNVDKVQESRNSKSRSREQQSS.

Residues 12–132 form the Calponin-homology (CH) domain; sequence QFMTSPLVTW…KLLLLLLGCA (121 aa). Positions 196–425 form a coiled coil; the sequence is HLKRLIDERD…EMAQKQSMDE (230 aa). Phosphoserine occurs at positions 233, 237, and 449. Positions 458-1385 form a coiled coil; it reads TSSRLLKLEM…KIMDQYKFYD (928 aa). Disordered regions lie at residues 816–842 and 1010–1035; these read ENKS…KRLR and RQDE…RESQ. Serine 1020 bears the Phosphoserine mark. A compositionally biased stretch (basic and acidic residues) spans 1026–1035; sequence EDNKWERESQ. The residue at position 1387 (serine 1387) is a Phosphoserine. Residues 1390–1408 are phosphoinositide-binding; the sequence is RRRGNWITLKMRKLIKSKK. A compositionally biased stretch (basic and acidic residues) spans 1407-1416; sequence KKDINRERQK. Disordered regions lie at residues 1407-1459 and 1559-1601; these read KKDI…LGTK and TTSF…SNNN. At serine 1417 the chain carries Phosphoserine; by PKB/AKT1. Polar residues-rich tracts occupy residues 1417–1430, 1445–1459, and 1559–1578; these read SLTL…SSEG, VGSN…LGTK, and TTSF…STGS. Threonine 1421 is subject to Phosphothreonine. The GBA signature appears at 1672-1702; the sequence is KTGSPGSEVVTLQQFLEESNKLTSVQIKSSS. Threonine 1673 carries the phosphothreonine modification. At serine 1675 the chain carries Phosphoserine. Phosphoserine; by PKC/PRKCQ is present on serine 1690. An SH2-like; required for interaction with growth factor receptors region spans residues 1713–1823; it reads SLSVSSDFLG…GTTRRTSIHD (111 aa). Serine 1717 carries the phosphoserine modification. The interval 1736-1871 is disordered; the sequence is SGKTPGDFYD…KSRSREQQSS (136 aa). Residues 1743-1763 are compositionally biased toward basic and acidic residues; sequence FYDRRTTKPEFLRPGPRKTED. Phosphotyrosine is present on residues tyrosine 1765 and tyrosine 1799. Polar residues-rich tracts occupy residues 1787-1799 and 1807-1818; these read SSLS…SNPY and SVISTAEGTTRR. Phosphoserine is present on residues serine 1820 and serine 1837. The span at 1820–1830 shows a compositional bias: basic and acidic residues; sequence SIHDFLTKDSR. Low complexity predominate over residues 1838 to 1851; that stretch reads PPAAADSNTTAASN. A compositionally biased stretch (basic and acidic residues) spans 1854–1871; the sequence is KVQESRNSKSRSREQQSS.

The protein belongs to the CCDC88 family. In terms of assembly, homodimer. Interacts (via GBA motif) with guanine nucleotide-binding protein G(i) alpha subunits GNAI1, GNAI2 and GNAI3. Also interacts (via GNA motif) with guanine nucleotide-binding protein G(s) alpha subunit GNAS. Interaction with G(i) alpha subunits occurs before interaction with GNAS and is regulated by phosphorylation; phosphorylation at Ser-1675 enhances binding to G(i) alpha subunits while phosphorylation at Ser-1690 abolishes G(i) alpha subunit binding, promoting binding to GNAS. Interacts (via C-terminal SH2-like region) with growth factor receptors EGFR, INSR and KDR/VEGFR2 (via their autophosphorylated cytoplasmic tails). Forms a complex with EGFR and GNAI3 which leads to enhanced EGFR signaling and triggering of cell migration; ligand stimulation is required for recruitment of GNAI3 to the complex. Interacts (tyrosine-phosphorylated form) with phosphatidylinositol 3-kinase (PI3K) regulatory subunit PIK3R1/p85a (via SH2 domains); the interaction enables recruitment of PIK3R1 to the EGFR receptor, enhancing PI3K activity and cell migration. Interacts with serine/threonine-protein kinase PRKCQ; the interaction leads to phosphorylation of CCDC88A and inhibition of its guanine nucleotide exchange factor activity. Interacts (via C-terminus) with DISC1; the interaction is direct. Interacts with AKT proteins; the interaction is inhibited in the presence of DISC1. Interacts with AKT1/PKB (via C-terminus). The non-phosphorylated form interacts with phosphatidylinositol 4-phosphate [PI(4)P] and weakly with phosphatidylinositol 3-phosphate [PI(3)P]. Interacts with microtubules. Interacts with actin. In terms of processing, phosphorylation is induced by epidermal growth factor (EGF) in a phosphoinositide 3-kinase (PI3K)-dependent manner. Phosphorylation by AKT1/PKB is necessary for delocalization from the cell membrane and for cell migration. Phosphorylated on tyrosine residues which promotes binding to phosphatidylinositol 3-kinase (PI3K) regulatory subunit PIK3R1/p85a and enhances PI3K activity. Tyrosine-phosphorylated by both receptor and non-receptor tyrosine kinases in vitro. Tyrosine phosphorylation is required for AKT1-dependent phosphorylation of Ser-1417. Phosphorylation at Ser-1690 by PRKCQ disrupts interaction with GNAI3 and inhibits guanine nucleotide exchange factor activity. Expressed ubiquitously.

The protein localises to the cell membrane. The protein resides in the cytoplasm. It is found in the cytosol. Its subcellular location is the cytoplasmic vesicle. It localises to the cell projection. The protein localises to the lamellipodium. The protein resides in the cytoskeleton. It is found in the cilium basal body. Its subcellular location is the microtubule organizing center. It localises to the centrosome. The protein localises to the centriole. Functionally, bifunctional modulator of guanine nucleotide-binding proteins (G proteins). Acts as a non-receptor guanine nucleotide exchange factor which binds to and activates guanine nucleotide-binding protein G(i) alpha subunits. Also acts as a guanine nucleotide dissociation inhibitor for guanine nucleotide-binding protein G(s) subunit alpha GNAS. Essential for cell migration. Interacts in complex with G(i) alpha subunits with the EGFR receptor, retaining EGFR at the cell membrane following ligand stimulation and promoting EGFR signaling which triggers cell migration. Binding to Gi-alpha subunits displaces the beta and gamma subunits from the heterotrimeric G-protein complex which enhances phosphoinositide 3-kinase (PI3K)-dependent phosphorylation and kinase activity of AKT1/PKB. Phosphorylation of AKT1/PKB induces the phosphorylation of downstream effectors GSK3 and FOXO1/FKHR, and regulates DNA replication and cell proliferation. Binds in its tyrosine-phosphorylated form to the phosphatidylinositol 3-kinase (PI3K) regulatory subunit PIK3R1 which enables recruitment of PIK3R1 to the EGFR receptor, enhancing PI3K activity and cell migration. Plays a role as a key modulator of the AKT-mTOR signaling pathway, controlling the tempo of the process of newborn neuron integration during adult neurogenesis, including correct neuron positioning, dendritic development and synapse formation. Inhibition of G(s) subunit alpha GNAS leads to reduced cellular levels of cAMP and suppression of cell proliferation. Essential for the integrity of the actin cytoskeleton. Required for formation of actin stress fibers and lamellipodia. May be involved in membrane sorting in the early endosome. Plays a role in ciliogenesis and cilium morphology and positioning and this may partly be through regulation of the localization of scaffolding protein CROCC/Rootletin. The sequence is that of Girdin (CCDC88A) from Homo sapiens (Human).